The primary structure comprises 161 residues: Troponin C, slow skeletal and cardiac muscles (161 aa).

Met-1 is subject to N-acetylmethionine. 4 EF-hand domains span residues 16-51, 52-87, 92-127, and 128-161; these read QKNE…LGQN, PTPE…CMKD, KTEE…TGET, and ITED…KGVE. The Ca(2+) site is built by Asp-65, Asp-67, Ser-69, Thr-71, Asp-105, Asn-107, Asp-109, Tyr-111, Glu-116, Asn-143, Asp-145, Arg-147, and Glu-152.

It belongs to the troponin C family.

In terms of biological role, troponin is the central regulatory protein of striated muscle contraction. Tn consists of three components: Tn-I which is the inhibitor of actomyosin ATPase, Tn-T which contains the binding site for tropomyosin and Tn-C. The binding of calcium to Tn-C abolishes the inhibitory action of Tn on actin filaments. In Coturnix japonica (Japanese quail), this protein is Troponin C, slow skeletal and cardiac muscles (TNNC1).